A 60-amino-acid chain; its full sequence is Large ribosomal subunit protein bL32 (60 aa).

Basic residues predominate over residues 1–16; it reads MAVPKRKTTPSKRGMR. The interval 1–60 is disordered; it reads MAVPKRKTTPSKRGMRRSADALKQPAYVENPDSGELHRPHHVDLKSGMYRGKQILKPKGE. Residues 34-44 show a composition bias toward basic and acidic residues; sequence GELHRPHHVDL.

It belongs to the bacterial ribosomal protein bL32 family.

The protein is Large ribosomal subunit protein bL32 of Parvibaculum lavamentivorans (strain DS-1 / DSM 13023 / NCIMB 13966).